Consider the following 33-residue polypeptide: U13-ctenitoxin-Pn1c (33 aa).

Intrachain disulfides connect Cys3–Cys17, Cys10–Cys21, and Cys16–Cys30.

As to expression, expressed by the venom gland.

The protein resides in the secreted. Acts as a neurotoxin. This is U13-ctenitoxin-Pn1c from Phoneutria nigriventer (Brazilian armed spider).